Consider the following 246-residue polypeptide: Bidirectional sugar transporter SWEET3a (246 aa).

Residues 1-6 are Extracellular-facing; sequence MFPDIR. Residues 7–27 traverse the membrane as a helical segment; sequence FIVGIIGSVACMLLYSAPILT. One can recognise a MtN3/slv 1 domain in the interval 7-96; that stretch reads FIVGIIGSVA…ISIYVWFAPR (90 aa). The Cytoplasmic portion of the chain corresponds to 28–42; sequence FKRVIKKASVEEFSC. Residues 43–63 form a helical membrane-spanning segment; it reads IPYILALFSCLTYSWYGFPVV. At 64 to 74 the chain is on the extracellular side; that stretch reads SYGWENMTVCS. Asn69 carries an N-linked (GlcNAc...) asparagine glycan. A helical transmembrane segment spans residues 75 to 95; that stretch reads ISSLGVLFEGTFISIYVWFAP. Residues 96 to 101 lie on the Cytoplasmic side of the membrane; that stretch reads RGKKKQ. The chain crosses the membrane as a helical span at residues 102-122; the sequence is VMLMASLILAVFCMTVFFSSF. The Extracellular segment spans residues 123 to 131; it reads SIHNHHIRK. The chain crosses the membrane as a helical span at residues 132–152; the sequence is VFVGSVGLVSSISMYGSPLVA. Residues 133-217 form the MtN3/slv 2 domain; that stretch reads FVGSVGLVSS…VVYCIYSKCK (85 aa). Residues 153-166 are Cytoplasmic-facing; the sequence is MKQVIRTKSVEFMP. A helical transmembrane segment spans residues 167-187; that stretch reads FYLSLFTLFTSLTWMAYGVIG. Topologically, residues 188 to 191 are extracellular; sequence RDPF. The helical transmembrane segment at 192–212 threads the bilayer; it reads IATPNCIGSIMGILQLVVYCI. Residues 213 to 246 lie on the Cytoplasmic side of the membrane; that stretch reads YSKCKEAPKVLHDIEQANVVKIPTSHVDTKGHNP.

It belongs to the SWEET sugar transporter family. Forms homooligomers and/or heterooligomers.

The protein resides in the cell membrane. Functionally, mediates both low-affinity uptake and efflux of sugar across the plasma membrane. This Oryza sativa subsp. japonica (Rice) protein is Bidirectional sugar transporter SWEET3a (SWEET3A).